The chain runs to 250 residues: FAS1 domain-containing protein AER383W (250 aa).

The N-terminal stretch at 1–18 (MRLKTILLGFCAFHVARS) is a signal peptide. The region spanning 87–247 (GVTLDDRLQS…GIVLVIDSSL (161 aa)) is the FAS1 domain.

The protein localises to the vacuole. The chain is FAS1 domain-containing protein AER383W from Eremothecium gossypii (strain ATCC 10895 / CBS 109.51 / FGSC 9923 / NRRL Y-1056) (Yeast).